We begin with the raw amino-acid sequence, 143 residues long: ATP synthase subunit 9, mitochondrial (143 aa).

The transit peptide at 1–62 (MAASRVFAQR…ARQAFAARRQ (62 aa)) directs the protein to the mitochondrion. Transmembrane regions (helical) follow at residues 85–105 (IGLG…LLAV) and 119–139 (AILG…VAMM).

It belongs to the ATPase C chain family. As to quaternary structure, F-type ATPases have 2 components, CF(1) - the catalytic core - and CF(0) - the membrane proton channel. CF(1) has five subunits: alpha(3), beta(3), gamma(1), delta(1), epsilon(1). CF(0) has three main subunits: a, b and c.

The protein localises to the mitochondrion membrane. Its function is as follows. Mitochondrial membrane ATP synthase (F(1)F(0) ATP synthase or Complex V) produces ATP from ADP in the presence of a proton gradient across the membrane which is generated by electron transport complexes of the respiratory chain. F-type ATPases consist of two structural domains, F(1) - containing the extramembraneous catalytic core and F(0) - containing the membrane proton channel, linked together by a central stalk and a peripheral stalk. During catalysis, ATP synthesis in the catalytic domain of F(1) is coupled via a rotary mechanism of the central stalk subunits to proton translocation. Part of the complex F(0) domain. A homomeric c-ring of probably 10 subunits is part of the complex rotary element. The chain is ATP synthase subunit 9, mitochondrial (atp9) from Emericella nidulans (strain FGSC A4 / ATCC 38163 / CBS 112.46 / NRRL 194 / M139) (Aspergillus nidulans).